The sequence spans 284 residues: MSAQLINGKEVSQKRLQAVAEAVAQRQQDNLHMPCLAVVLVGGDPASAVYVRNKKTACQKCGIKSLSYELPESTSQEELLALVDRLNADSEVDGILVQLPLPKHLDSQAVLERISPDKDVDGFHPYNVGRLAVKMPLMRPCTPKGVMTLLEAYGIDPKGKKAVVVGASNIVGRPQALELLLARATVTVCHSATENLADEVAGADILVVGVGIPNFVKGEWIKPGAVVIDVGINRLDDGSLCGDVEFETAKERAAMITPVPGGVGPMTIATLMENTLHAASLHDA.

NADP(+) is bound by residues 166–168, Ser191, and Ile232; that span reads GAS.

Belongs to the tetrahydrofolate dehydrogenase/cyclohydrolase family. Homodimer.

It carries out the reaction (6R)-5,10-methylene-5,6,7,8-tetrahydrofolate + NADP(+) = (6R)-5,10-methenyltetrahydrofolate + NADPH. The catalysed reaction is (6R)-5,10-methenyltetrahydrofolate + H2O = (6R)-10-formyltetrahydrofolate + H(+). The protein operates within one-carbon metabolism; tetrahydrofolate interconversion. In terms of biological role, catalyzes the oxidation of 5,10-methylenetetrahydrofolate to 5,10-methenyltetrahydrofolate and then the hydrolysis of 5,10-methenyltetrahydrofolate to 10-formyltetrahydrofolate. In Neisseria meningitidis serogroup C (strain 053442), this protein is Bifunctional protein FolD.